The chain runs to 21 residues: Kassinatuerin-1 (21 aa).

An Isoleucine amide modification is found at Ile-21.

Expressed by the skin dorsal glands.

It is found in the secreted. Shows broad-spectrum antimicrobial activity against the Gram-negative bacterium E.coli (MIC=6.25 uM), K.pneumoniae (MIC=25 uM), E.cloacae (MIC=6.25 uM), P.aeruginosa (MIC=25 uM), the Gram-positive bacterium S.aureus (MIC=6.25 uM), S.epidermidis (MIC=6.25 uM), E.faecalis (MIC=12.5 uM), and the fungus C.albicans (MIC=100 uM). Has no antimicrobial effect against P.mirabilis (MIC&gt;100 uM). Has relatively high cytolytic and hemolytic activities. Its alpha-helix has considerable amphipathic character. In Kassina senegalensis (Senegal running frog), this protein is Kassinatuerin-1.